A 392-amino-acid chain; its full sequence is Phosphoglycerate kinase (392 aa).

Residues 21–23 (DLN), Arg-36, 59–62 (HLGR), Arg-114, and Arg-147 contribute to the substrate site. ATP-binding positions include Lys-198, Glu-320, and 346-349 (GGDT).

This sequence belongs to the phosphoglycerate kinase family. Monomer.

The protein resides in the cytoplasm. The enzyme catalyses (2R)-3-phosphoglycerate + ATP = (2R)-3-phospho-glyceroyl phosphate + ADP. It functions in the pathway carbohydrate degradation; glycolysis; pyruvate from D-glyceraldehyde 3-phosphate: step 2/5. This is Phosphoglycerate kinase from Nitrosomonas europaea (strain ATCC 19718 / CIP 103999 / KCTC 2705 / NBRC 14298).